An 85-amino-acid chain; its full sequence is Large ribosomal subunit protein bL27 (85 aa).

It belongs to the bacterial ribosomal protein bL27 family.

In Campylobacter fetus subsp. fetus (strain 82-40), this protein is Large ribosomal subunit protein bL27.